The following is a 94-amino-acid chain: Cell division protein FtsB (94 aa).

The Cytoplasmic portion of the chain corresponds to 1–3; that stretch reads MRT. Residues 4–21 traverse the membrane as a helical segment; sequence FAIFLLIALGWLQYTLWF. Residues 22-94 lie on the Periplasmic side of the membrane; it reads GKNGMSDYAQ…YRIIDENSEG (73 aa). The stretch at 33-71 forms a coiled coil; sequence SNDVALQEEVNQGLRNRNEQMFAEIDDLKKGSEAIEERA.

Belongs to the FtsB family. In terms of assembly, part of a complex composed of FtsB, FtsL and FtsQ.

It is found in the cell inner membrane. Functionally, essential cell division protein. May link together the upstream cell division proteins, which are predominantly cytoplasmic, with the downstream cell division proteins, which are predominantly periplasmic. This Aliivibrio fischeri (strain ATCC 700601 / ES114) (Vibrio fischeri) protein is Cell division protein FtsB.